The following is a 570-amino-acid chain: Peptidyl-prolyl cis-trans isomerase FKBP9 (570 aa).

The first 24 residues, 1–24, serve as a signal peptide directing secretion; that stretch reads MAFRGWRPPPPPLLLLLLWVTGQA. PPIase FKBP-type domains follow at residues 54 to 142, 166 to 254, 278 to 365, and 389 to 477; these read GDFV…MDIW, SDFV…LDLH, GDFL…IDFH, and GDYL…LELV. Residues Asn-174, Asn-286, Asn-302, and Asn-397 are each glycosylated (N-linked (GlcNAc...) asparagine). EF-hand domains are found at residues 488-523 and 533-568; these read WNGE…QVAS and DAEL…AKHD. Residues Asp-501, Asp-503, Asn-505, Glu-507, Glu-512, Asp-546, Asn-548, Asp-550, Lys-552, and Glu-557 each coordinate Ca(2+). The short motif at 567–570 is the Prevents secretion from ER element; the sequence is HDEL.

Phosphorylated.

The protein resides in the endoplasmic reticulum. It catalyses the reaction [protein]-peptidylproline (omega=180) = [protein]-peptidylproline (omega=0). Its activity is regulated as follows. Inhibited by FK506. Its function is as follows. PPIases accelerate the folding of proteins during protein synthesis. The chain is Peptidyl-prolyl cis-trans isomerase FKBP9 (FKBP9) from Homo sapiens (Human).